Here is a 315-residue protein sequence, read N- to C-terminus: Methionyl-tRNA formyltransferase (315 aa).

110 to 113 is a (6S)-5,6,7,8-tetrahydrofolate binding site; the sequence is SLLP.

It belongs to the Fmt family.

The catalysed reaction is L-methionyl-tRNA(fMet) + (6R)-10-formyltetrahydrofolate = N-formyl-L-methionyl-tRNA(fMet) + (6S)-5,6,7,8-tetrahydrofolate + H(+). Functionally, attaches a formyl group to the free amino group of methionyl-tRNA(fMet). The formyl group appears to play a dual role in the initiator identity of N-formylmethionyl-tRNA by promoting its recognition by IF2 and preventing the misappropriation of this tRNA by the elongation apparatus. In Cutibacterium acnes (strain DSM 16379 / KPA171202) (Propionibacterium acnes), this protein is Methionyl-tRNA formyltransferase.